Consider the following 227-residue polypeptide: Cytochrome c oxidase subunit 2 (227 aa).

Topologically, residues 1–14 (MAHPVQLSLQDATS) are mitochondrial intermembrane. Residues 15–45 (PVMEELITFHDHAFMAMSLISFLVLYALLST) traverse the membrane as a helical segment. Residues 46–59 (LTTKLTNTSITDAQ) lie on the Mitochondrial matrix side of the membrane. A helical membrane pass occupies residues 60-87 (EMETIWTILPAIILILIALPSLRILYLT). The Mitochondrial intermembrane portion of the chain corresponds to 88–227 (DEVNDPSFTI…IFEMGPVLTL (140 aa)). Residues histidine 161, cysteine 196, glutamate 198, cysteine 200, histidine 204, and methionine 207 each contribute to the Cu cation site. Glutamate 198 lines the Mg(2+) pocket.

This sequence belongs to the cytochrome c oxidase subunit 2 family. As to quaternary structure, component of the cytochrome c oxidase (complex IV, CIV), a multisubunit enzyme composed of 14 subunits. The complex is composed of a catalytic core of 3 subunits MT-CO1, MT-CO2 and MT-CO3, encoded in the mitochondrial DNA, and 11 supernumerary subunits COX4I, COX5A, COX5B, COX6A, COX6B, COX6C, COX7A, COX7B, COX7C, COX8 and NDUFA4, which are encoded in the nuclear genome. The complex exists as a monomer or a dimer and forms supercomplexes (SCs) in the inner mitochondrial membrane with NADH-ubiquinone oxidoreductase (complex I, CI) and ubiquinol-cytochrome c oxidoreductase (cytochrome b-c1 complex, complex III, CIII), resulting in different assemblies (supercomplex SCI(1)III(2)IV(1) and megacomplex MCI(2)III(2)IV(2)). Found in a complex with TMEM177, COA6, COX18, COX20, SCO1 and SCO2. Interacts with TMEM177 in a COX20-dependent manner. Interacts with COX20. Interacts with COX16. Cu cation serves as cofactor.

It localises to the mitochondrion inner membrane. It catalyses the reaction 4 Fe(II)-[cytochrome c] + O2 + 8 H(+)(in) = 4 Fe(III)-[cytochrome c] + 2 H2O + 4 H(+)(out). In terms of biological role, component of the cytochrome c oxidase, the last enzyme in the mitochondrial electron transport chain which drives oxidative phosphorylation. The respiratory chain contains 3 multisubunit complexes succinate dehydrogenase (complex II, CII), ubiquinol-cytochrome c oxidoreductase (cytochrome b-c1 complex, complex III, CIII) and cytochrome c oxidase (complex IV, CIV), that cooperate to transfer electrons derived from NADH and succinate to molecular oxygen, creating an electrochemical gradient over the inner membrane that drives transmembrane transport and the ATP synthase. Cytochrome c oxidase is the component of the respiratory chain that catalyzes the reduction of oxygen to water. Electrons originating from reduced cytochrome c in the intermembrane space (IMS) are transferred via the dinuclear copper A center (CU(A)) of subunit 2 and heme A of subunit 1 to the active site in subunit 1, a binuclear center (BNC) formed by heme A3 and copper B (CU(B)). The BNC reduces molecular oxygen to 2 water molecules using 4 electrons from cytochrome c in the IMS and 4 protons from the mitochondrial matrix. This Macaca mulatta (Rhesus macaque) protein is Cytochrome c oxidase subunit 2 (MT-CO2).